Here is a 594-residue protein sequence, read N- to C-terminus: UvrABC system protein C (594 aa).

Positions 14-91 (DSPGCYLHKD…IQENMPKYNI (78 aa)) constitute a GIY-YIG domain. The UVR domain occupies 196–231 (DKIIDDLRSKMLEASNKQEFERAAEYRDLISGIATM).

This sequence belongs to the UvrC family. Interacts with UvrB in an incision complex.

The protein localises to the cytoplasm. Functionally, the UvrABC repair system catalyzes the recognition and processing of DNA lesions. UvrC both incises the 5' and 3' sides of the lesion. The N-terminal half is responsible for the 3' incision and the C-terminal half is responsible for the 5' incision. This Streptococcus equi subsp. zooepidemicus (strain MGCS10565) protein is UvrABC system protein C.